The primary structure comprises 607 residues: Pyruvate decarboxylase 1 (607 aa).

D69 and H156 together coordinate substrate. Residues 434 to 516 form a thiamine pyrophosphate binding region; sequence DSWFNCQKLK…FLINNGGYTI (83 aa). Residues D484, N511, and G513 each contribute to the Mg(2+) site. E517 contributes to the substrate binding site.

The protein belongs to the TPP enzyme family. In terms of assembly, homotetramer. A metal cation is required as a cofactor. Thiamine diphosphate serves as cofactor. In terms of tissue distribution, highly expressed in seeds, and at lower levels in roots and siliques.

The catalysed reaction is a 2-oxocarboxylate + H(+) = an aldehyde + CO2. Functionally, may play a role in ethanolic fermentation during anoxia. This is Pyruvate decarboxylase 1 (PDC1) from Arabidopsis thaliana (Mouse-ear cress).